Reading from the N-terminus, the 197-residue chain is Probable chemoreceptor glutamine deamidase CheD 2 (197 aa).

Belongs to the CheD family.

The enzyme catalyses L-glutaminyl-[protein] + H2O = L-glutamyl-[protein] + NH4(+). Functionally, probably deamidates glutamine residues to glutamate on methyl-accepting chemotaxis receptors (MCPs), playing an important role in chemotaxis. In Dechloromonas aromatica (strain RCB), this protein is Probable chemoreceptor glutamine deamidase CheD 2.